Reading from the N-terminus, the 276-residue chain is Release factor glutamine methyltransferase (276 aa).

Residues 117-121 (GTGTG), Asp-140, Trp-168, and Asn-182 each bind S-adenosyl-L-methionine. 182–185 (NPPY) serves as a coordination point for substrate.

The protein belongs to the protein N5-glutamine methyltransferase family. PrmC subfamily.

It carries out the reaction L-glutaminyl-[peptide chain release factor] + S-adenosyl-L-methionine = N(5)-methyl-L-glutaminyl-[peptide chain release factor] + S-adenosyl-L-homocysteine + H(+). Its function is as follows. Methylates the class 1 translation termination release factors RF1/PrfA and RF2/PrfB on the glutamine residue of the universally conserved GGQ motif. The sequence is that of Release factor glutamine methyltransferase from Yersinia pestis.